The chain runs to 112 residues: MKKIDAIIKPFKLDDVREALAEVGITGMTVTEVKGFGRQKGHTELYRGAEYMVDFLPKVKIEIVVPDDIVDTCVDTIIRTAQTGKIGDGKIFVFDVARVIRIRTGEEDDAAI.

Residue Tyr-51 is modified to O-UMP-tyrosine.

Belongs to the P(II) protein family. As to quaternary structure, homotrimer. In terms of processing, uridylylated/deuridylylated by GlnD.

Its function is as follows. P-II indirectly controls the transcription of the glutamine synthetase gene (GlnA). P-II prevents NR-II-catalyzed conversion of NR-I to NR-I-phosphate, the transcriptional activator of GlnA. When P-II is uridylylated to P-II-UMP, these events are reversed. When the ratio of Gln to 2-ketoglutarate decreases, P-II is uridylylated to P-II-UMP, which causes the deadenylation of glutamine synthetase by GlnE, so activating the enzyme. This Escherichia coli O157:H7 protein is Nitrogen regulatory protein P-II 1 (glnB).